The chain runs to 549 residues: Limonene dehydrogenase subunit B (549 aa).

The protein belongs to the carotenoid/retinoid oxidoreductase family. As to quaternary structure, heterodimer composed of CtmA and CtmB. It depends on FAD as a cofactor.

It is found in the cytoplasm. The enzyme catalyses (4S)-limonene + A + H2O = (4S)-perillyl alcohol + AH2. The catalysed reaction is (4R)-limonene + A + H2O = (4R)-perillyl alcohol + AH2. It participates in terpene metabolism; monoterpene degradation. Its activity is regulated as follows. The presence of molecular oxygen causes a 40% reduction in specific activity. Involved in the degradation of the cyclic monoterpene limonene. Catalyzes the oxidation of limonene at the primary methyl group, forming perillyl alcohol. Hydroxylates the R- and S-enantiomers to their respective enantiomeric form of perillyl alcohol at a similar rate. Native CtmAB oxidizes a wide range of monocyclic monoterpenes containing the allylic methyl group motif (1-methyl-cyclohex-1-ene). Can also catalyze the reverse reaction, the reduction of perillyl alcohol to limonene, but with lower efficiency. Cannot use molecular oxygen as an electron acceptor. The natural electron acceptor is likely a heterodimeric electron transfer flavoprotein (ETF). This is Limonene dehydrogenase subunit B from Castellaniella defragrans (strain DSM 12143 / CCUG 39792 / 65Phen) (Alcaligenes defragrans).